A 210-amino-acid chain; its full sequence is Large ribosomal subunit protein uL3 (210 aa).

A disordered region spans residues 125–151 (HGFGGGPRTHGQSDRLRAPGSIGAGTD).

It belongs to the universal ribosomal protein uL3 family. In terms of assembly, part of the 50S ribosomal subunit. Forms a cluster with proteins L14 and L19.

One of the primary rRNA binding proteins, it binds directly near the 3'-end of the 23S rRNA, where it nucleates assembly of the 50S subunit. The sequence is that of Large ribosomal subunit protein uL3 from Roseiflexus sp. (strain RS-1).